A 430-amino-acid polypeptide reads, in one-letter code: Enolase (430 aa).

Q167 provides a ligand contact to (2R)-2-phosphoglycerate. Catalysis depends on E209, which acts as the Proton donor. The Mg(2+) site is built by D245, E286, and D313. The (2R)-2-phosphoglycerate site is built by K338, R367, S368, and K389. Catalysis depends on K338, which acts as the Proton acceptor.

The protein belongs to the enolase family. Mg(2+) serves as cofactor.

The protein localises to the cytoplasm. Its subcellular location is the secreted. It is found in the cell surface. The catalysed reaction is (2R)-2-phosphoglycerate = phosphoenolpyruvate + H2O. It participates in carbohydrate degradation; glycolysis; pyruvate from D-glyceraldehyde 3-phosphate: step 4/5. Catalyzes the reversible conversion of 2-phosphoglycerate (2-PG) into phosphoenolpyruvate (PEP). It is essential for the degradation of carbohydrates via glycolysis. This is Enolase from Synechococcus sp. (strain CC9605).